We begin with the raw amino-acid sequence, 855 residues long: DNA mismatch repair protein MutS (855 aa).

613–620 (GPNMGGKS) contacts ATP. A disordered region spans residues 796–816 (TTSLPHEMPSQQSGKPASPMQ).

It belongs to the DNA mismatch repair MutS family.

In terms of biological role, this protein is involved in the repair of mismatches in DNA. It is possible that it carries out the mismatch recognition step. This protein has a weak ATPase activity. The polypeptide is DNA mismatch repair protein MutS (Pseudomonas aeruginosa (strain ATCC 15692 / DSM 22644 / CIP 104116 / JCM 14847 / LMG 12228 / 1C / PRS 101 / PAO1)).